A 352-amino-acid chain; its full sequence is N-lysine methyltransferase KMT5A (352 aa).

The interval 21–51 (AVAATAPGPEMVERRGPGRPRTNGENVFTGQ) is disordered. Ser59 is subject to Phosphoserine. Residues 87–202 (PLAGIYRKRD…KSKAELQSEE (116 aa)) are disordered. The segment covering 109–121 (MKAEEQKIKDARR) has biased composition (basic and acidic residues). Thr140 bears the Phosphothreonine mark. Over residues 156–172 (GLKKPVRGKQAPRKKAQ) the composition is skewed to basic residues. Residues 216 to 337 (EGMKIDLIDG…AGEELLYDYG (122 aa)) enclose the SET domain. Residues 226–228 (KGR), Tyr271, and 298–299 (NH) each bind S-adenosyl-L-methionine.

It belongs to the class V-like SAM-binding methyltransferase superfamily. Histone-lysine methyltransferase family. PR/SET subfamily. In terms of assembly, interacts with L3MBTL1. Interacts with SIRT2 (phosphorylated form); the interaction is direct, stimulates KMT5A-mediated methyltransferase activity at histone H4 'Lys-20' (H4K20me1) and is increased in a H(2)O(2)-induced oxidative stress-dependent manner. Post-translationally, ubiquitinated and degraded by the DCX(DTL) complex.

Its subcellular location is the nucleus. The protein localises to the chromosome. The enzyme catalyses L-lysyl(20)-[histone H4] + S-adenosyl-L-methionine = N(6)-methyl-L-lysyl(20)-[histone H4] + S-adenosyl-L-homocysteine + H(+). It catalyses the reaction L-lysyl-[protein] + S-adenosyl-L-methionine = N(6)-methyl-L-lysyl-[protein] + S-adenosyl-L-homocysteine + H(+). Its function is as follows. Protein-lysine N-methyltransferase that monomethylates both histones and non-histone proteins. Specifically monomethylates 'Lys-20' of histone H4 (H4K20me1). H4K20me1 is enriched during mitosis and represents a specific tag for epigenetic transcriptional repression. Mainly functions in euchromatin regions, thereby playing a central role in the silencing of euchromatic genes. Required for cell proliferation, probably by contributing to the maintenance of proper higher-order structure of DNA during mitosis. Involved in chromosome condensation and proper cytokinesis. Nucleosomes are preferred as substrate compared to free histones. Mediates monomethylation of p53/TP53 at 'Lys-382', leading to repress p53/TP53-target genes. Plays a negative role in TGF-beta response regulation and a positive role in cell migration. This chain is N-lysine methyltransferase KMT5A, found in Bos taurus (Bovine).